We begin with the raw amino-acid sequence, 600 residues long: 1-deoxy-D-xylulose-5-phosphate synthase (600 aa).

Residues histidine 57 and 98-100 (GHA) each bind thiamine diphosphate. Position 125 (aspartate 125) interacts with Mg(2+). Thiamine diphosphate is bound by residues 126–127 (AS), asparagine 155, tyrosine 264, and glutamate 343. Asparagine 155 is a binding site for Mg(2+).

Belongs to the transketolase family. DXPS subfamily. As to quaternary structure, homodimer. It depends on Mg(2+) as a cofactor. Requires thiamine diphosphate as cofactor.

The enzyme catalyses D-glyceraldehyde 3-phosphate + pyruvate + H(+) = 1-deoxy-D-xylulose 5-phosphate + CO2. The protein operates within metabolic intermediate biosynthesis; 1-deoxy-D-xylulose 5-phosphate biosynthesis; 1-deoxy-D-xylulose 5-phosphate from D-glyceraldehyde 3-phosphate and pyruvate: step 1/1. Catalyzes the acyloin condensation reaction between C atoms 2 and 3 of pyruvate and glyceraldehyde 3-phosphate to yield 1-deoxy-D-xylulose-5-phosphate (DXP). The sequence is that of 1-deoxy-D-xylulose-5-phosphate synthase from Fusobacterium nucleatum subsp. nucleatum (strain ATCC 25586 / DSM 15643 / BCRC 10681 / CIP 101130 / JCM 8532 / KCTC 2640 / LMG 13131 / VPI 4355).